The primary structure comprises 226 residues: MQLSPVTLPTTAEEAMAVQDDLRARVVAANPRPPVFATVAGVDSAYDDAAGLVATAVVVLDTATLEPIESAVAHGPVRFPYVPGLLAFRELPTTLSALEQLRTTPDLLVCDAQGLAHPRRFGLACHVGVRTGLPTIGVAKNAWGAWTEPGRRRGDAAELVLDGEVVGLALRTRDDVKPVFVSVGHHIDLPTAREQVLALTPRYRQPETTRQADRLCRAALRAATGG.

Residues Asp-43 and Asp-111 each contribute to the Mg(2+) site.

It belongs to the endonuclease V family. Requires Mg(2+) as cofactor.

It localises to the cytoplasm. It catalyses the reaction Endonucleolytic cleavage at apurinic or apyrimidinic sites to products with a 5'-phosphate.. Functionally, DNA repair enzyme involved in the repair of deaminated bases. Selectively cleaves double-stranded DNA at the second phosphodiester bond 3' to a deoxyinosine leaving behind the intact lesion on the nicked DNA. In Nocardia farcinica (strain IFM 10152), this protein is Endonuclease V.